A 213-amino-acid chain; its full sequence is Uridine kinase (213 aa).

15–22 lines the ATP pocket; sequence GASASGKS.

Belongs to the uridine kinase family.

The protein resides in the cytoplasm. The catalysed reaction is uridine + ATP = UMP + ADP + H(+). The enzyme catalyses cytidine + ATP = CMP + ADP + H(+). It functions in the pathway pyrimidine metabolism; CTP biosynthesis via salvage pathway; CTP from cytidine: step 1/3. The protein operates within pyrimidine metabolism; UMP biosynthesis via salvage pathway; UMP from uridine: step 1/1. The protein is Uridine kinase of Salmonella paratyphi A (strain ATCC 9150 / SARB42).